Reading from the N-terminus, the 245-residue chain is MDYSSMHQNVMGVSSCSTQDYQNQKKPLSATRPAPPEQSLRCPRCDSTNTKFCYYNNYSLSQPRYFCKSCRRYWTKGGILRNIPIGGAYRKHKRSSSATKSLRTTPEPTMTHDGKSFPTASFGYNNNNISNEQMELGLAYALLNKQPLGVSSHLGFGSSQSPMAMDGVYGTTSHQMENTGYAFGNGGGGMEQMATSDPNRVLWGFPWQMNMGGGSGHGHGHVDQIDSGREIWSSTVNYINTGALL.

Residues 15–26 (SCSTQDYQNQKK) are compositionally biased toward polar residues. A disordered region spans residues 15–41 (SCSTQDYQNQKKPLSATRPAPPEQSLR). The segment at 40 to 94 (LRCPRCDSTNTKFCYYNNYSLSQPRYFCKSCRRYWTKGGILRNIPIGGAYRKHKR) adopts a Dof-type zinc-finger fold. The Zn(2+) site is built by cysteine 42, cysteine 45, cysteine 67, and cysteine 70. The tract at residues 91–118 (KHKRSSSATKSLRTTPEPTMTHDGKSFP) is disordered. The span at 96 to 108 (SSATKSLRTTPEP) shows a compositional bias: polar residues.

Interacts with TCP14. In terms of tissue distribution, the PEAR proteins (e.g. DOF2.4, DOF5.1, DOF3.2, DOF1.1, DOF5.6 and DOF5.3) form a short-range concentration gradient that peaks at protophloem sieve elements (PSE).

The protein resides in the nucleus. Functionally, transcription factor that negatively affects seed germination and opposes TCP14 function in the regulation of a specific set of abscisic acid-related genes. The PEAR proteins (e.g. DOF2.4, DOF5.1, DOF3.2, DOF1.1, DOF5.6 and DOF5.3) activate gene expression that promotes radial growth of protophloem sieve elements. This is Dof zinc finger protein DOF3.2 from Arabidopsis thaliana (Mouse-ear cress).